A 344-amino-acid polypeptide reads, in one-letter code: MATMYYEQNINEEVLKGKKIAIIGYGSQGHAHALNLKESGFDVVVGVRPGGSFDAAKADGVDVKTVAEAAQEADVIQILLPDERQKAVYEAEIAPHLEAGKALMFAHGFNIHFGQITPPADVDVFLVAPKGPGHLVRRQFQEGAGVPGLFAIHQDATGQAKDLALAYGKGIGAARGGLLETTFKEETETDLFGEQAVLCGGATQLVKAGFETLVEAGYQPELAYFETLHELKLIVDLMFEGGMATMRYSVSDTAEWGDYVAGPRIIDESVKARMKDVLTDIQDGTFARRWIQENENGRPEYTKFKEAGANHQIEEVGAKLREMMPFINEGKEKVVREVATSAKN.

The 181-residue stretch at 1 to 181 folds into the KARI N-terminal Rossmann domain; the sequence is MATMYYEQNI…GAARGGLLET (181 aa). Residues 25 to 28, Arg48, Ser52, and 82 to 85 contribute to the NADP(+) site; these read YGSQ and DERQ. His107 is a catalytic residue. Residue Gly133 coordinates NADP(+). Residues 182–327 form the KARI C-terminal knotted domain; that stretch reads TFKEETETDL…AKLREMMPFI (146 aa). Mg(2+) is bound by residues Asp190, Glu194, Glu226, and Glu230. Ser251 lines the substrate pocket.

This sequence belongs to the ketol-acid reductoisomerase family. Mg(2+) serves as cofactor.

The catalysed reaction is (2R)-2,3-dihydroxy-3-methylbutanoate + NADP(+) = (2S)-2-acetolactate + NADPH + H(+). The enzyme catalyses (2R,3R)-2,3-dihydroxy-3-methylpentanoate + NADP(+) = (S)-2-ethyl-2-hydroxy-3-oxobutanoate + NADPH + H(+). It participates in amino-acid biosynthesis; L-isoleucine biosynthesis; L-isoleucine from 2-oxobutanoate: step 2/4. It functions in the pathway amino-acid biosynthesis; L-valine biosynthesis; L-valine from pyruvate: step 2/4. Its function is as follows. Involved in the biosynthesis of branched-chain amino acids (BCAA). Catalyzes an alkyl-migration followed by a ketol-acid reduction of (S)-2-acetolactate (S2AL) to yield (R)-2,3-dihydroxy-isovalerate. In the isomerase reaction, S2AL is rearranged via a Mg-dependent methyl migration to produce 3-hydroxy-3-methyl-2-ketobutyrate (HMKB). In the reductase reaction, this 2-ketoacid undergoes a metal-dependent reduction by NADPH to yield (R)-2,3-dihydroxy-isovalerate. The sequence is that of Ketol-acid reductoisomerase (NADP(+)) from Lysinibacillus sphaericus (strain C3-41).